A 324-amino-acid chain; its full sequence is Lactonase drp35 (324 aa).

Ca(2+) contacts are provided by glutamate 47, serine 109, glycine 111, aspartate 129, threonine 132, tyrosine 134, aspartate 137, asparagine 184, aspartate 235, and serine 236. Aspartate 235 serves as the catalytic Proton donor.

The protein belongs to the SMP-30/CGR1 family. Requires Ca(2+) as cofactor.

The protein resides in the cytoplasm. Exhibits lactonase activity. Acts in cells with perturbed membrane integrity and is possibly related to the membrane homeostasis. This Staphylococcus saprophyticus subsp. saprophyticus (strain ATCC 15305 / DSM 20229 / NCIMB 8711 / NCTC 7292 / S-41) protein is Lactonase drp35 (drp35).